A 250-amino-acid polypeptide reads, in one-letter code: Probable phosphatase VPA1527 (250 aa).

9 residues coordinate Zn(2+): His-8, His-10, His-16, His-41, Glu-74, His-102, His-132, Asp-194, and His-196.

This sequence belongs to the PHP family. Zn(2+) serves as cofactor.

The chain is Probable phosphatase VPA1527 from Vibrio parahaemolyticus serotype O3:K6 (strain RIMD 2210633).